Reading from the N-terminus, the 1216-residue chain is Probable phospholipid-transporting ATPase 4 (1216 aa).

The Cytoplasmic portion of the chain corresponds to 1-74 (MARGRIRSKL…TTRYNLITFF (74 aa)). Residues 75–96 (PKCLYEQFHRAANFYFLVAAIL) traverse the membrane as a helical segment. Over 97-100 (SVFP) the chain is Extracellular. The chain crosses the membrane as a helical span at residues 101–123 (LSPFNKWSMIAPLVFVVGLSMLK). At 124–305 (EALEDWSRFM…SRIEKTMDYI (182 aa)) the chain is on the cytoplasmic side. A helical membrane pass occupies residues 306–327 (IYTLLVLLILISCISSSGFAWE). At 328–359 (TKFHMPKWWYLRPEEPENLTNPSNPVYAGFVH) the chain is on the extracellular side. A helical transmembrane segment spans residues 360–377 (LITALLLYGYLIPISLYV). The Cytoplasmic portion of the chain corresponds to 378-922 (SIEVVKVLQA…HGHWCYKRIA (545 aa)). D425 (4-aspartylphosphate intermediate) is an active-site residue. K605 is covalently cross-linked (Glycyl lysine isopeptide (Lys-Gly) (interchain with G-Cter in ubiquitin)). Mg(2+) is bound by residues D867 and D871. The chain crosses the membrane as a helical span at residues 923–942 (QMICYFFYKNIAFGLTLFYF). Topologically, residues 943–956 (EAFTGFSGQSVYND) are extracellular. The helical transmembrane segment at 957-976 (YYLLLFNVVLTSLPVIALGV) threads the bilayer. At 977 to 1006 (FEQDVSSEICLQFPALYQQGKKNLFFDWYR) the chain is on the cytoplasmic side. A helical transmembrane segment spans residues 1007 to 1029 (ILGWMGNGVYSSLVIFFLNIGII). Residues 1030-1042 (YEQAFRVSGQTAD) are Extracellular-facing. Residues 1043 to 1065 (MDAVGTTMFTCIIWAVNVQIALT) traverse the membrane as a helical segment. Residues 1066 to 1071 (VSHFTW) lie on the Cytoplasmic side of the membrane. Residues 1072–1092 (IQHVLIWGSIGLWYLFVALYG) traverse the membrane as a helical segment. At 1093–1109 (MMPPSLSGNIYRILVEI) the chain is on the extracellular side. Residues 1110–1134 (LAPAPIYWIATFLVTVTTVLPYFAH) traverse the membrane as a helical segment. The Cytoplasmic portion of the chain corresponds to 1135 to 1216 (ISFQRFLHPL…TQDTMSPRSV (82 aa)). Residues 1195–1216 (LNKKQSNMSQFSTQDTMSPRSV) form a disordered region. Residues 1198–1216 (KQSNMSQFSTQDTMSPRSV) are compositionally biased toward polar residues.

It belongs to the cation transport ATPase (P-type) (TC 3.A.3) family. Type IV subfamily.

Its subcellular location is the membrane. The enzyme catalyses ATP + H2O + phospholipidSide 1 = ADP + phosphate + phospholipidSide 2.. Its function is as follows. Involved in transport of phospholipids. The polypeptide is Probable phospholipid-transporting ATPase 4 (Arabidopsis thaliana (Mouse-ear cress)).